Reading from the N-terminus, the 666-residue chain is Leucine zipper putative tumor suppressor 2 homolog (666 aa).

Disordered regions lie at residues 1–35, 227–249, and 266–307; these read MAAVQALPLSIDQNTEASGSQSHTNTRSPVTENTM, IAHSGTMSDSGRTSLSSLPTSNT, and NLDN…PILN. Polar residues-rich tracts occupy residues 11-35 and 227-238; these read IDQNTEASGSQSHTNTRSPVTENTM and IAHSGTMSDSGR. 2 stretches are compositionally biased toward low complexity: residues 239-249 and 286-304; these read TSLSSLPTSNT and RPSNSDSGRSSSSKSTGSP. Residues 305-647 adopt a coiled-coil conformation; the sequence is ILNDEILIRE…TVELDAREFN (343 aa).

Belongs to the LZTS2 family.

It is found in the cytoplasm. The protein resides in the cytoskeleton. It localises to the microtubule organizing center. Its subcellular location is the centrosome. In terms of biological role, negative regulator of katanin-mediated microtubule severing and release from the centrosome. Required for central spindle formation and the completion of cytokinesis. Negative regulator of the Wnt signaling pathway. Represses beta-catenin-mediated transcriptional activation by promoting the nuclear exclusion of beta-catenin. The polypeptide is Leucine zipper putative tumor suppressor 2 homolog (lzts2) (Xenopus laevis (African clawed frog)).